Consider the following 384-residue polypeptide: MKFCSLFHVLSFCCTLAYAVPKSQFLQLHSLSNAIPVEWKWYGSVDEDSGYVYLTSKDSNEARSGSLWSTSVLRQVGWQLSTSFVAHVSENENTFFAIWYTSAVGSEGPVFGASDKWDGLLISQEIDQTGKIFVRGYLNDKSFELAQFTDPDLPPFAKCTIESSPEALNNIILKYGDQSGLELFVNDKPCFQVKDVILPQGYYFGVSSQSTSAKDLVALSNLNILPPDTSNNENLNPTSNTKQSVGDNTSPQTVIDTEGLNAIKADLAKLFNLVESQRQKMDSLHFALTNALERLNDISSTSQFPSERFNALEKLLHDSLSAQSSTADGTSKHLAEFEKEIKKAMGNAYSPYNLTNFMVFLLLGAIVSYGIMLVRRDRRRHKYL.

A signal peptide spans 1–19; that stretch reads MKFCSLFHVLSFCCTLAYA. In terms of domain architecture, L-type lectin-like spans 20–224; sequence VPKSQFLQLH…DLVALSNLNI (205 aa). Over 20–353 the chain is Extracellular; it reads VPKSQFLQLH…AMGNAYSPYN (334 aa). Residues 227–251 are disordered; the sequence is PDTSNNENLNPTSNTKQSVGDNTSP. The chain crosses the membrane as a helical span at residues 354 to 374; that stretch reads LTNFMVFLLLGAIVSYGIMLV. Over 375 to 384 the chain is Cytoplasmic; that stretch reads RRDRRRHKYL.

It localises to the membrane. The protein resides in the endoplasmic reticulum. It is found in the golgi apparatus. The protein is L-type lectin-like domain-containing protein C4F6.05c of Schizosaccharomyces pombe (strain 972 / ATCC 24843) (Fission yeast).